The primary structure comprises 458 residues: V-type sodium ATPase subunit B (458 aa).

The protein belongs to the ATPase alpha/beta chains family.

Involved in ATP-driven sodium extrusion. This Enterococcus hirae (strain ATCC 9790 / DSM 20160 / JCM 8729 / LMG 6399 / NBRC 3181 / NCIMB 6459 / NCDO 1258 / NCTC 12367 / WDCM 00089 / R) protein is V-type sodium ATPase subunit B (ntpB).